Here is a 185-residue protein sequence, read N- to C-terminus: Ribosome-recycling factor (185 aa).

A disordered region spans residues 135–159; it reads ANDEVKKLEKDKAITEDESKKGQDE.

This sequence belongs to the RRF family.

The protein localises to the cytoplasm. In terms of biological role, responsible for the release of ribosomes from messenger RNA at the termination of protein biosynthesis. May increase the efficiency of translation by recycling ribosomes from one round of translation to another. The polypeptide is Ribosome-recycling factor (Campylobacter curvus (strain 525.92)).